Consider the following 158-residue polypeptide: SH3 domain-binding glutamic acid-rich protein homolog (158 aa).

Over residues 40 to 51 (TEPGKESEKELM) the composition is skewed to basic and acidic residues. The tract at residues 40-74 (TEPGKESEKELMQNKSTSNGGTVSDPEPRHPLPPQ) is disordered. The span at 52 to 61 (QNKSTSNGGT) shows a compositional bias: polar residues. An SH3-binding motif is present at residues 67–73 (PRHPLPP). T109 carries the phosphothreonine modification. Residues 118–158 (LKQENGDAKKEEAETEAEDKKTEAGDGDVDVKEEAAEKAEV) form a disordered region.

It belongs to the SH3BGR family.

The protein is SH3 domain-binding glutamic acid-rich protein homolog (Sh3beta) of Drosophila melanogaster (Fruit fly).